A 177-amino-acid chain; its full sequence is Ribosome maturation factor RimM (177 aa).

Positions 101-174 (EGEFHLLDLV…WLLLTPPPGL (74 aa)) constitute a PRC barrel domain.

It belongs to the RimM family. Binds ribosomal protein uS19.

It is found in the cytoplasm. Its function is as follows. An accessory protein needed during the final step in the assembly of 30S ribosomal subunit, possibly for assembly of the head region. Essential for efficient processing of 16S rRNA. May be needed both before and after RbfA during the maturation of 16S rRNA. It has affinity for free ribosomal 30S subunits but not for 70S ribosomes. In Synechococcus sp. (strain CC9605), this protein is Ribosome maturation factor RimM.